The chain runs to 77 residues: Putative defensin-like protein 162 (77 aa).

The signal sequence occupies residues 1 to 27 (MAKQLCSYMFISMFILSAFLALPSAEG). Cystine bridges form between C34–C77, C44–C63, C49–C71, and C53–C73.

This sequence belongs to the DEFL family.

The protein localises to the secreted. In Arabidopsis thaliana (Mouse-ear cress), this protein is Putative defensin-like protein 162 (LCR37).